The primary structure comprises 1255 residues: MENLNRKKAIKIELANPDTIRSWSHGEVLKPETINYKTLKAEKDGLFDERIFGPTKNYECVCGRYKKANPMNKGKKCEKCGVELTESIVRRERMGHIELEEPVTHIWMLKVAPYRIAAILDLKAKELEEVVYFVSHIVLEQGNQSHFLEKEVLDLGSSRITKTREKLQLSILDVIDQINDPEHRDTKKANRLLEELKNTSIPFSIDEATSLISKYTNAKFGIGARAVEYLLEKVDLTKEIEAIKIQLENSKKTPNERTKLLKRLETFDSLKRSKQRPEWMVMRVIPVIPPDIRPIIQLDGGRFTTSEINDLYRRIIIRNERLKKVKEMGAPSIIVNNEKRMLQEAVDALFDNERKPKPVQGKNKRPLKSLTSVLKGKQGRFRQNLLGKRVDYSARSVIAIGPDLKMYQAGLPREMAITLFKPFVIQWLQDHEYAENVKIAEKMLLQNDPKVWEALEQVIKDRPVLLNRAPTLHRLGIQAFEPKLVKGKAIRLHPLVTTAFNADFDGDQMAVHVPITKEAVAESRALMLGSSAILGPKDGKAIVTPGQDIILGNYYLTTEEKNAKGQGMIFSSLDEAFMAYNSGQIHLNSLIGIALSALPEEKFSDKNQRLNSYLLTTVGKLYFNQIFDDNFPWINSNNIWNAKEAVKEFIYDFSQDIDKVIENVQVQQPIKKKELSLIIERYFETHGARKTAEMLDKMKDLGFSFSTKSGTTISAGDVVAFTHKYDEFKEADQKVEQITDFYNMGMLTNSEKKRRIIDVWSEVKDKIQNELATVLRKDVKNPIFVMVDSGARGNVSNFTQLVGMRGLMNDTKGDIKEIPIKSSFREGLTVSEYFVSTHGARKGMADIALKTADSGYLTRRLVDVSQEIVVVNEDCEPTKGFEVSAIIDTKHDNVIVPLKDRLVGRFTFEDIYDDDKNLVASANTLIDKNIAEKIIMSGISSVIIRSVLTCDNKRGVCQKCYGLNLATASVVNIGEPVGVIAAQSIGEPGTQLTMRNFHTGGVAGNVDITQGLPRIKELLDVTTPKGAVAIISEVDGVVSEIEDYNGVFVINIVTENEEVKKYKTEFNSVLRVEQGSSVMAGQKLTEGAIDLHQLLEFGGIQDVQNYILKEVQKVYRLQGIEISDKYIEIIIKQMLNKVKITDSGDSDLLPGEIITIQNYKEVVQDCIVKSIRPPLSKAQIFGIKKAPLESSSWLSSASFQDTARVLTRAIIKGKEDKLEGLKENIMLGNLIPAGTGLTGTQEVEQLAEQYHNNEY.

The Zn(2+) site is built by C60, C62, C77, and C80. Mg(2+) is bound by residues D503, D505, and D507. Residues C875, C950, C957, and C960 each coordinate Zn(2+).

The protein belongs to the RNA polymerase beta' chain family. The RNAP catalytic core consists of 2 alpha, 1 beta, 1 beta' and 1 omega subunit. When a sigma factor is associated with the core the holoenzyme is formed, which can initiate transcription. The cofactor is Mg(2+). Zn(2+) serves as cofactor.

The catalysed reaction is RNA(n) + a ribonucleoside 5'-triphosphate = RNA(n+1) + diphosphate. Its function is as follows. DNA-dependent RNA polymerase catalyzes the transcription of DNA into RNA using the four ribonucleoside triphosphates as substrates. The chain is DNA-directed RNA polymerase subunit beta' from Mycoplasma capricolum subsp. capricolum (strain California kid / ATCC 27343 / NCTC 10154).